The following is a 215-amino-acid chain: Methylthioribulose-1-phosphate dehydratase (215 aa).

Zn(2+)-binding residues include histidine 103 and histidine 105.

The protein belongs to the aldolase class II family. MtnB subfamily. Requires Zn(2+) as cofactor.

It carries out the reaction 5-(methylsulfanyl)-D-ribulose 1-phosphate = 5-methylsulfanyl-2,3-dioxopentyl phosphate + H2O. It functions in the pathway amino-acid biosynthesis; L-methionine biosynthesis via salvage pathway; L-methionine from S-methyl-5-thio-alpha-D-ribose 1-phosphate: step 2/6. In terms of biological role, catalyzes the dehydration of methylthioribulose-1-phosphate (MTRu-1-P) into 2,3-diketo-5-methylthiopentyl-1-phosphate (DK-MTP-1-P). This chain is Methylthioribulose-1-phosphate dehydratase, found in Persephonella marina (strain DSM 14350 / EX-H1).